Here is a 115-residue protein sequence, read N- to C-terminus: DNA-directed RNA polymerase II subunit RPB11-b1 (115 aa).

The protein belongs to the archaeal Rpo11/eukaryotic RPB11/RPC19 RNA polymerase subunit family. As to quaternary structure, component of the RNA polymerase II (Pol II) complex consisting of 12 subunits. Ubiquitously expressed.

It localises to the nucleus. Functionally, DNA-dependent RNA polymerase catalyzes the transcription of DNA into RNA using the four ribonucleoside triphosphates as substrates. Component of RNA polymerase II which synthesizes mRNA precursors and many functional non-coding RNAs. Pol II is the central component of the basal RNA polymerase II transcription machinery. It is composed of mobile elements that move relative to each other. RPB11 is part of the core element with the central large cleft. This chain is DNA-directed RNA polymerase II subunit RPB11-b1 (POLR2J2), found in Homo sapiens (Human).